The sequence spans 115 residues: MGVPSGLILCVLIGAFFISMAAAGDSGAYDWVMPARSGGGCKGSIGECIAEEEEFELDSESNRRILATKKYISYGALQKNSVPCSRRGASYYNCKPGAQANPYSRGCSAITRCRS.

A signal peptide spans 1-23; the sequence is MGVPSGLILCVLIGAFFISMAAA. Residues 24–66 constitute a propeptide, removed in mature form; it reads GDSGAYDWVMPARSGGGCKGSIGECIAEEEEFELDSESNRRIL. 2 disulfide bridges follow: cysteine 84–cysteine 94 and cysteine 107–cysteine 113.

In terms of processing, proteolytically cleaved, probably by S1P, a subtilisin-like serine protease (subtilase).

The protein localises to the secreted. In terms of biological role, cell signaling peptide that may regulate plant stress, growth, and development. Mediates a rapid alkalinization of extracellular space by mediating a transient increase in the cytoplasmic Ca(2+) concentration leading to a calcium-dependent signaling events through a cell surface receptor and a concomitant activation of some intracellular mitogen-activated protein kinases. Prevents root growth and seedling development in heterologous system. This chain is Rapid alkalinization factor (RALF), found in Nicotiana tabacum (Common tobacco).